The sequence spans 176 residues: Peptide deformylase (176 aa).

2 residues coordinate Fe cation: C100 and H142. E143 is an active-site residue. H146 contacts Fe cation.

This sequence belongs to the polypeptide deformylase family. It depends on Fe(2+) as a cofactor.

The enzyme catalyses N-terminal N-formyl-L-methionyl-[peptide] + H2O = N-terminal L-methionyl-[peptide] + formate. Its function is as follows. Removes the formyl group from the N-terminal Met of newly synthesized proteins. Requires at least a dipeptide for an efficient rate of reaction. N-terminal L-methionine is a prerequisite for activity but the enzyme has broad specificity at other positions. The chain is Peptide deformylase from Elusimicrobium minutum (strain Pei191).